The sequence spans 398 residues: uncharacterized protein (398 aa).

A helical transmembrane segment spans residues 88-108 (IGFTIGFAIFFILLFLLSNMV).

The protein to B.megaterium SpoIV.

The protein localises to the cell membrane. This is an uncharacterized protein from Bacillus subtilis (strain 168).